Reading from the N-terminus, the 174-residue chain is Large ribosomal subunit protein uL18 (174 aa).

It belongs to the universal ribosomal protein uL18 family. Part of the 50S ribosomal subunit. Contacts the 5S and 23S rRNAs.

This is one of the proteins that bind and probably mediate the attachment of the 5S RNA into the large ribosomal subunit, where it forms part of the central protuberance. In Methanosarcina acetivorans (strain ATCC 35395 / DSM 2834 / JCM 12185 / C2A), this protein is Large ribosomal subunit protein uL18.